Reading from the N-terminus, the 322-residue chain is ADP,ATP carrier protein (322 aa).

3 Solcar repeats span residues 25 to 118, 130 to 222, and 230 to 316; these read STFF…FKKM, KWFA…LKPV, and GNFL…VQLL. The next 5 membrane-spanning stretches (helical) occupy residues 27 to 54, 95 to 119, 128 to 148, 198 to 219, and 233 to 253; these read FFFD…VKLL, TANV…KKMF, YAKW…ASLL, FGPS…YDTL, and LASF…SYPL. ADP is bound by residues arginine 100 and lysine 112. Arginine 257 is an ADP binding site. Positions 257–262 are important for transport activity; it reads RRRMMM. A Nucleotide carrier signature motif motif is present at residues 257–262; sequence RRRMMM. A helical membrane pass occupies residues 293–313; the sequence is AGANILRGVAGAGVLSIYDQV.

It belongs to the mitochondrial carrier (TC 2.A.29) family. As to quaternary structure, monomer.

It is found in the mitochondrion inner membrane. It catalyses the reaction ADP(in) + ATP(out) = ADP(out) + ATP(in). The matrix-open state (m-state) is inhibited by the membrane-permeable bongkrekic acid (BKA). The cytoplasmic-open state (c-state) is inhibited by the membrane-impermeable toxic inhibitor carboxyatractyloside (CATR). Its function is as follows. ADP:ATP antiporter that mediates import of ADP into the mitochondrial matrix for ATP synthesis, and export of ATP out to fuel the cell. Cycles between the cytoplasmic-open state (c-state) and the matrix-open state (m-state): operates by the alternating access mechanism with a single substrate-binding site intermittently exposed to either the cytosolic (c-state) or matrix (m-state) side of the inner mitochondrial membrane. The chain is ADP,ATP carrier protein (anc1) from Schizosaccharomyces pombe (strain 972 / ATCC 24843) (Fission yeast).